The following is an 89-amino-acid chain: Small ribosomal subunit protein uS15 (89 aa).

The protein belongs to the universal ribosomal protein uS15 family. In terms of assembly, part of the 30S ribosomal subunit. Forms a bridge to the 50S subunit in the 70S ribosome, contacting the 23S rRNA.

In terms of biological role, one of the primary rRNA binding proteins, it binds directly to 16S rRNA where it helps nucleate assembly of the platform of the 30S subunit by binding and bridging several RNA helices of the 16S rRNA. Its function is as follows. Forms an intersubunit bridge (bridge B4) with the 23S rRNA of the 50S subunit in the ribosome. This chain is Small ribosomal subunit protein uS15, found in Limosilactobacillus reuteri (strain DSM 20016) (Lactobacillus reuteri).